Reading from the N-terminus, the 276-residue chain is Phosducin-like protein 1 (276 aa).

A phosphoserine mark is found at S18, S19, S20, and S42. The interval 18–74 is disordered; sequence SSSEGEDNGDEGGDNKGASGKSRCSGLTIDTNPDATPAGGFRQQSSTNTGPKGVVKD. The region spanning 62-272 is the Phosducin domain; the sequence is SSTNTGPKGV…LIEHGIIVDR (211 aa). Positions 153–276 are thioredoxin fold; it reads FGQVQQLTSH…GIIVDRALYN (124 aa).

It belongs to the phosducin family. As to quaternary structure, forms a complex with the beta and gamma subunits of the GTP-binding proteins. Interacts with the CCT chaperonin complex.

Functionally, functions as a co-chaperone for CCT in the assembly of heterotrimeric G protein complexes, facilitates the assembly of both Gbeta-Ggamma and RGS-Gbeta5 heterodimers. The chain is Phosducin-like protein 1 from Drosophila melanogaster (Fruit fly).